The chain runs to 647 residues: DNA mismatch repair protein MutL (647 aa).

It belongs to the DNA mismatch repair MutL/HexB family.

Functionally, this protein is involved in the repair of mismatches in DNA. It is required for dam-dependent methyl-directed DNA mismatch repair. May act as a 'molecular matchmaker', a protein that promotes the formation of a stable complex between two or more DNA-binding proteins in an ATP-dependent manner without itself being part of a final effector complex. This is DNA mismatch repair protein MutL from Bacillus thuringiensis (strain Al Hakam).